The primary structure comprises 257 residues: Glucose-1-phosphate cytidylyltransferase (257 aa).

Substrate is bound by residues 6 to 10 (LAGGL), 11 to 13 (GTR), lysine 23, serine 104, arginine 109, and glycine 128. Residues aspartate 129 and aspartate 234 each coordinate Mg(2+).

It belongs to the glucose-1-phosphate cytidylyltransferase family. As to quaternary structure, homohexamer. It depends on Mg(2+) as a cofactor.

It catalyses the reaction alpha-D-glucose 1-phosphate + CTP + H(+) = CDP-D-glucose + diphosphate. Its pathway is nucleotide-sugar biosynthesis; CDP-3,6-dideoxy-D-mannose biosynthesis; CDP-3,6-dideoxy-D-mannose from CTP and alpha-D-glucose 1-phosphate: step 1/5. It functions in the pathway bacterial outer membrane biogenesis; LPS O-antigen biosynthesis. Functionally, involved in the biosynthesis of the tyvelose, a 3,6-dideoxyhexose found in the O-antigen of the surface lipopolysaccharides. It catalyzes the transfer of a CMP moiety from CTP to glucose 1-phosphate. This enzyme can utilize either CTP or UTP as the nucleotide donor. In Salmonella typhi, this protein is Glucose-1-phosphate cytidylyltransferase (rfbF).